The sequence spans 801 residues: Probable methionine--tRNA ligase (801 aa).

A 'HIGH' region motif is present at residues 25–35 (PYVNNVPHLGN). The 'KMSKS' region motif lies at 347 to 351 (KFSKS). Residue lysine 350 coordinates ATP. Residues 606-633 (DKLKGTKLSDGGQKKEQKKQSGGSKSKN) are disordered. Positions 639 to 742 (TVAKLDIRVG…ESAAVGERVT (104 aa)) constitute a tRNA-binding domain.

The protein belongs to the class-I aminoacyl-tRNA synthetase family.

It localises to the cytoplasm. It catalyses the reaction tRNA(Met) + L-methionine + ATP = L-methionyl-tRNA(Met) + AMP + diphosphate. In Oryza sativa subsp. japonica (Rice), this protein is Probable methionine--tRNA ligase.